A 425-amino-acid chain; its full sequence is Serine--tRNA ligase (425 aa).

Position 235 to 237 (235 to 237 (TAE)) interacts with L-serine. 266–268 (RSE) is an ATP binding site. Residue Glu-289 participates in L-serine binding. 353 to 356 (EISS) provides a ligand contact to ATP. Ser-389 is an L-serine binding site.

Belongs to the class-II aminoacyl-tRNA synthetase family. Type-1 seryl-tRNA synthetase subfamily. Homodimer. The tRNA molecule binds across the dimer.

The protein localises to the cytoplasm. It carries out the reaction tRNA(Ser) + L-serine + ATP = L-seryl-tRNA(Ser) + AMP + diphosphate + H(+). The catalysed reaction is tRNA(Sec) + L-serine + ATP = L-seryl-tRNA(Sec) + AMP + diphosphate + H(+). It functions in the pathway aminoacyl-tRNA biosynthesis; selenocysteinyl-tRNA(Sec) biosynthesis; L-seryl-tRNA(Sec) from L-serine and tRNA(Sec): step 1/1. Catalyzes the attachment of serine to tRNA(Ser). Is also able to aminoacylate tRNA(Sec) with serine, to form the misacylated tRNA L-seryl-tRNA(Sec), which will be further converted into selenocysteinyl-tRNA(Sec). The chain is Serine--tRNA ligase from Desulfotalea psychrophila (strain LSv54 / DSM 12343).